The primary structure comprises 397 residues: Urea transporter 2 (397 aa).

The next 5 membrane-spanning stretches (helical) occupy residues V68–F85, A92–L109, A115–F135, W143–L163, and L172–H192. N210 carries an N-linked (GlcNAc...) asparagine glycan. 5 helical membrane passes run W239–L257, T264–I280, F287–I303, L309–L329, and V331–L351.

Belongs to the urea transporter family. In terms of tissue distribution, kidney.

It is found in the apical cell membrane. It localises to the basolateral cell membrane. It catalyses the reaction urea(in) = urea(out). Its activity is regulated as follows. Inhibited by urea analogs and phloretin. In terms of biological role, mediates the transport of urea driven by a concentration gradient across the cell membrane of the renal inner medullary collecting duct which is critical to the urinary concentrating mechanism. The protein is Urea transporter 2 (SLC14A2) of Oryctolagus cuniculus (Rabbit).